The following is a 1030-amino-acid chain: Protein phosphatase 1 regulatory subunit 12A (1030 aa).

Residues Lys-35 to Phe-38 carry the KVKF motif motif. ANK repeat units follow at residues Asp-39 to Tyr-68, Asp-72 to Gln-101, Glu-105 to Ala-134, Glu-138 to Val-164, Ser-198 to Ile-227, and Asp-231 to Met-260. Asn-67 and Asn-100 each carry (3S)-3-hydroxyasparagine; by HIF1AN; partial. Asn-226 carries the post-translational modification (3S)-3-hydroxyasparagine; by HIF1AN; partial. Disordered stretches follow at residues Leu-290–Thr-628 and Ala-643–Asp-928. Basic and acidic residues predominate over residues His-291 to Pro-300. A Phosphoserine modification is found at Ser-299. Polar residues predominate over residues Ile-302 to Thr-316. Residues Lys-318–Glu-340 are compositionally biased toward basic and acidic residues. Acidic residues predominate over residues Ser-357–Ala-369. Residues Thr-385–Ser-402 are compositionally biased toward low complexity. 2 positions are modified to phosphoserine: Ser-422 and Ser-432. Positions Ser-422 to Ser-432 are enriched in basic and acidic residues. The residue at position 443 (Thr-443) is a Phosphothreonine. Ser-445 is subject to Phosphoserine; by NUAK1. Tyr-446 is modified (phosphotyrosine). The span at Arg-469–Leu-480 shows a compositional bias: low complexity. Position 472 is a phosphoserine; by NUAK1 (Ser-472). Ser-473 is modified (phosphoserine; by CDK1). Ser-477 is modified (phosphoserine). The span at Asp-481–Gly-491 shows a compositional bias: basic and acidic residues. Ser-507 and Ser-509 each carry phosphoserine. The segment covering Asn-540–Lys-551 has biased composition (polar residues). The segment covering Ser-564–Ser-610 has biased composition (low complexity). Ser-601 and Ser-618 each carry phosphoserine. Positions Trp-614–Ser-625 are enriched in basic and acidic residues. Over residues Ala-643–Thr-660 the composition is skewed to low complexity. Over residues Val-673–Arg-682 the composition is skewed to basic and acidic residues. Residues Arg-682–Glu-864 are interaction with ROCK2. Residues Lys-683–Arg-693 show a composition bias toward basic residues. A phosphoserine; by PKA and PKG; in vitro mark is found at Ser-692 and Ser-695. Thr-696 bears the Phosphothreonine; by ROCK1, ROCK2, CDC42BP, ZIPK/DAPK3 and RAF1 mark. The span at Arg-718–Gln-767 shows a compositional bias: basic and acidic residues. Low complexity predominate over residues Ser-773–Ser-795. Residues Gln-796–Tyr-810 are compositionally biased toward polar residues. Ser-802 is subject to Phosphoserine. Residues Ile-814–Ile-840 show a composition bias toward basic and acidic residues. A compositionally biased stretch (basic residues) spans Arg-841–Ser-852. Residue Ser-852 is modified to Phosphoserine; by ROCK2. Positions Asp-861–Glu-875 are enriched in acidic residues. A phosphoserine mark is found at Ser-862 and Ser-871. Polar residues predominate over residues Thr-884 to Ala-897. 2 positions are modified to phosphoserine: Ser-903 and Ser-908. The segment covering Ser-903–Tyr-913 has biased composition (low complexity). Ser-910 bears the Phosphoserine; by NUAK1 mark. Residues Leu-914 to Asp-928 show a composition bias toward basic and acidic residues. Ser-995 is modified (phosphoserine).

PP1 comprises a catalytic subunit, PPP1CA, PPP1CB or PPP1CC, and one or several targeting or regulatory subunits. PPP1R12A mediates binding to myosin. Interacts with ARHA and CIT. Binds PPP1R12B, ROCK1 and IL16. Interacts directly with PRKG1. Non-covalent dimer of 2 dimers; PRKG1-PRKG1 and PPP1R12A-PPP1R12A. Interacts with SMTNL1. Interacts with PPP1CB; the interaction is direct. Interacts (when phosphorylated at Ser-445, Ser-472 and Ser-910) with 14-3-3. Interacts with ROCK1 and ROCK2. Interacts with isoform 1 and isoform 2 of ZIPK/DAPK3. Interacts with RAF1. Interacts with HIF1AN. Interacts with NCKAP1L. Post-translationally, phosphorylated by CIT (Rho-associated kinase). Phosphorylated cooperatively by ROCK1 and CDC42BP on Thr-696. Phosphorylated on upon DNA damage, probably by ATM or ATR. In vitro, phosphorylation of Ser-695 by PKA and PKG appears to prevent phosphorylation of the inhibitory site Thr-696, probably mediated by PRKG1. Phosphorylation at Ser-445, Ser-472 and Ser-910 by NUAK1 promotes interaction with 14-3-3, leading to inhibit interaction with myosin light chain MLC2, preventing dephosphorylation of MLC2. May be phosphorylated at Thr-696 by DMPK; may inhibit the myosin phosphatase activity. Phosphorylated at Ser-473 by CDK1 during mitosis, creating docking sites for the POLO box domains of PLK1. Subsequently, PLK1 binds and phosphorylates PPP1R12A. In terms of tissue distribution, expressed in striated muscles, specifically in type 2a fibers (at protein level).

It localises to the cytoplasm. Its subcellular location is the cytoskeleton. It is found in the stress fiber. In terms of biological role, key regulator of protein phosphatase 1C (PPP1C). Mediates binding to myosin. As part of the PPP1C complex, involved in dephosphorylation of PLK1. Capable of inhibiting HIF1AN-dependent suppression of HIF1A activity. The chain is Protein phosphatase 1 regulatory subunit 12A from Homo sapiens (Human).